A 137-amino-acid chain; its full sequence is MLQPKRTKFRKQQKMRNRGLAHRGNKVSFGEFGLQATSRGRVTARQIEAGRRAISRHIKRGGKIWIRIFPDKPITQKPLEVRMGKGKGSVEYWVAQIQPGRVLYEITGVKEELAREAFARAAAKMPVQTTFVEKQVM.

A disordered region spans residues 1 to 20 (MLQPKRTKFRKQQKMRNRGL).

This sequence belongs to the universal ribosomal protein uL16 family. In terms of assembly, part of the 50S ribosomal subunit.

Binds 23S rRNA and is also seen to make contacts with the A and possibly P site tRNAs. The sequence is that of Large ribosomal subunit protein uL16 from Francisella philomiragia subsp. philomiragia (strain ATCC 25017 / CCUG 19701 / FSC 153 / O#319-036).